A 492-amino-acid polypeptide reads, in one-letter code: Glutamyl-tRNA(Gln) amidotransferase subunit A (492 aa).

Active-site charge relay system residues include Lys78 and Ser158. Residue Ser182 is the Acyl-ester intermediate of the active site.

This sequence belongs to the amidase family. GatA subfamily. In terms of assembly, heterotrimer of A, B and C subunits.

It catalyses the reaction L-glutamyl-tRNA(Gln) + L-glutamine + ATP + H2O = L-glutaminyl-tRNA(Gln) + L-glutamate + ADP + phosphate + H(+). Functionally, allows the formation of correctly charged Gln-tRNA(Gln) through the transamidation of misacylated Glu-tRNA(Gln) in organisms which lack glutaminyl-tRNA synthetase. The reaction takes place in the presence of glutamine and ATP through an activated gamma-phospho-Glu-tRNA(Gln). In Rhodopseudomonas palustris (strain BisB18), this protein is Glutamyl-tRNA(Gln) amidotransferase subunit A.